A 128-amino-acid polypeptide reads, in one-letter code: Global transcriptional regulator Spx 1 (128 aa).

Cysteine 10 and cysteine 13 are joined by a disulfide.

It belongs to the ArsC family. Spx subfamily. As to quaternary structure, interacts with the C-terminal domain of the alpha subunit of the RNAP.

The protein localises to the cytoplasm. Global transcriptional regulator that plays a key role in stress response and exerts either positive or negative regulation of genes. Acts by interacting with the C-terminal domain of the alpha subunit of the RNA polymerase (RNAP). This interaction can enhance binding of RNAP to the promoter region of target genes and stimulate their transcription, or block interaction of RNAP with activator. In Lactococcus lactis subsp. lactis (strain IL1403) (Streptococcus lactis), this protein is Global transcriptional regulator Spx 1.